Reading from the N-terminus, the 336-residue chain is MAEDQNTTDRWELPSASEPVKNVDRWELPSASEPVKNVVLVGRTGNGKSATGNSIIGRKVFESKYQAVGVTTRCKTFRAVTPDGPIINVIDTPGLFDLAVSAEFISKEIVNCLILAREGLHAVVLVLSLSTRISQEEENALCTLQMLFGGKIVDYLIVVFTCGDMLEDRNMTLEDYLSNGCPEFLKNVLRLCGGRRVVFDNRTKDEGVKAKQVQQLLVHVAAIEKETGGNPFTDTMHRRIQEEAARVKREEKEIEEKNIADEEKAALKKQLDMSYSQNMNMMALMMERIFKETAAANERQMNMMKDFMEISIIGNDAHRKRAEEKQAEKKQECNIL.

One can recognise an AIG1-type G domain in the interval 33–241; the sequence is EPVKNVVLVG…FTDTMHRRIQ (209 aa). A G1 region spans residues 42–49; sequence GRTGNGKS. GTP-binding positions include 42–50 and Ser-63; that span reads GRTGNGKSA. The segment at 69-73 is G2; sequence GVTTR. The G3 stretch occupies residues 91-94; that stretch reads DTPG. The segment at 161–164 is G4; the sequence is TCGD. Residues 200–202 are G5; it reads DNR. Residue Asn-201 coordinates GTP. Residues 237–270 adopt a coiled-coil conformation; the sequence is HRRIQEEAARVKREEKEIEEKNIADEEKAALKKQ.

The protein belongs to the TRAFAC class TrmE-Era-EngA-EngB-Septin-like GTPase superfamily. AIG1/Toc34/Toc159-like paraseptin GTPase family. IAN subfamily. In terms of tissue distribution, mostly expressed in pollen. Also detected in lateral roots and radicles.

This Arabidopsis thaliana (Mouse-ear cress) protein is Immune-associated nucleotide-binding protein 6.